The sequence spans 520 residues: MERFPRSAADAQQLLQLAELFKQSAEIIAEEWNKEDFSRIKAETNSIKSNLGSLDTARILPSPRLHEATRTVLAITGAATELVAEPYSRIQEVACQYFESRALFVAAERRIPDLLAGAGEYGLSVGEIAEATGIEERKLSRILRCLCSIHIFRQIGTDRFANNRISAALKNNEPLRAYVQLFNLDIYTASDQLPKYLLSSQGASYKVHETAWQKAVGTTKARWDWLAERVSLDEVRPKEAPYPGLPDVRHLQPGPDGKYARPELDNFGLAMVGGGKVSGAAHAYDFPWASLGDALVVDVGGGVGGFVLQLLPAYPQLRYIVQDRAEVLQQAQEEIWPVEAPEAVADGRVQFMEHNFFQPNPVKGADVYWLRGIFYCVQILSALRTSMAPTSRILVCDQVMNTTAGCDEIPPAPSPLPANYGYYMRYPHHRDLAMMSIINGIERTPAQFTELVKQAGLKVNKIWNCRSMVGIVEIGLKNEKDRHHRRLSYMGFGNYTQLGIGFFSSAKGPVRDELQADEQA.

S-adenosyl-L-methionine contacts are provided by residues 300-301, Asp323, 355-356, and Arg371; these read GG and NF.

Belongs to the class I-like SAM-binding methyltransferase superfamily. Cation-independent O-methyltransferase family.

The protein operates within phytotoxin biosynthesis. Functionally, O-methyltransferase; part of the gene cluster that mediates the biosynthesis of cichorine, a phytotoxin active against knapweed, corn, and soybeans. The first step in the pathway is performed by the non-reducing polyketide synthase pkbA that condenses one acetyl-CoA starter unit with 3 malonyl-CoA units. PkbA also catalyzes one methylation step to produce 3-methylorsellinate. The nonribosomal peptide synthase-like protein cicB, the cytochrome P450 monooxygenase cicH and the O-methyltransferase cicE are involved in the conversion of 3-methylorsellinate into nidulol. CicB converts 3-methylorsellinate to a yet unidentified intermediate, cicH may play a ring-closing role for cichorine and cicE is plausibly responsible for the methylation of one of the phenol groups. The oxidoreductase cicC acts downstream with still unidentified enzymes to further convert nidulol into cichorine. This chain is O-methyltransferase cicE, found in Emericella nidulans (strain FGSC A4 / ATCC 38163 / CBS 112.46 / NRRL 194 / M139) (Aspergillus nidulans).